The chain runs to 427 residues: Intermediate conductance calcium-activated potassium channel protein 4 (427 aa).

Residues 29 to 49 (ALVLAGTGIGLMVLHAEMLWF) traverse the membrane as a helical segment. A helical transmembrane segment spans residues 59–79 (FLVKCTISISTFLLLCLIVAF). The helical transmembrane segment at 108–128 (IVLELVVCGLHPAPVRGPPCV) threads the bilayer. Residues 143–163 (GFLGQGEALLSLAMLLRLYLV) traverse the membrane as a helical segment. Residues 207–227 (LLLGLTLGLWLTTAWVLSVAE) form a helical membrane-spanning segment. Residues 241–261 (LWLIPITFLTIGYGDVVPGTM) constitute an intramembrane region (pore-forming). A helical membrane pass occupies residues 265 to 285 (IVCLCTGVMGVCCTALLVAVV). The calmodulin-binding stretch occupies residues 286–347 (ARKLEFNKAE…RRHQRKLLAA (62 aa)). Phosphohistidine is present on His358.

The protein belongs to the potassium channel KCNN family. KCa3.1/KCNN4 subfamily. In terms of assembly, homodimer. Homotetramer. Heterotetramer of potassium channel proteins. Interacts with MTMR6; this interaction leads to selective dephosphorylation of PI(3)P in a lipid microdomain adjacent to KCNN4, resulting in a decrease of intermediate conductance calcium-activated potassium channel activity. Interacts (via the C-tail domain) with CALM1; the calmodulin binding is constitutive, does not require calcium and mediates calcium-dependent gating and four calmodulin molecules bind to one channel tetramer. Phosphorylation at His-358 by NDKB activates the intermediate conductance calcium-activated potassium channel activity, and conversely it's dephosphorylation by PHPT1 inhibits this activity. As to expression, widely expressed in non-excitable tissues.

It is found in the cell membrane. The protein resides in the cell projection. Its subcellular location is the ruffle membrane. The enzyme catalyses K(+)(in) = K(+)(out). Its activity is regulated as follows. The channel is inhibited by clotrimazole and charybdotoxin but is insensitive to apamin. Its function is as follows. Intermediate conductance calcium-activated potassium channel that mediates the voltage-independent transmembrane transfer of potassium across the cell membrane through a constitutive interaction with calmodulin which binds the intracellular calcium allowing its opening. The current is characterized by a voltage-independent activation, an intracellular calcium concentration increase-dependent activation and a single-channel conductance of about 25 picosiemens. Also presents an inwardly rectifying current, thus reducing its already small outward conductance of potassium ions, which is particularly the case when the membrane potential displays positive values, above + 20 mV. Controls calcium influx during vascular contractility by being responsible of membrane hyperpolarization induced by vasoactive factors in proliferative vascular smooth muscle cell types. Following calcium influx, the consecutive activation of KCNN4 channel leads to a hyperpolarization of the cell membrane potential and hence an increase of the electrical driving force for further calcium influx promoting sustained calcium entry in response to stimulation with chemotactic peptides. Required for maximal calcium influx and proliferation during the reactivation of naive T-cells. Plays a role in the late stages of EGF-induced macropinocytosis through activation by PI(3)P. The protein is Intermediate conductance calcium-activated potassium channel protein 4 of Homo sapiens (Human).